The primary structure comprises 274 residues: RsbT co-antagonist protein RsbRA (274 aa).

In terms of domain architecture, STAS spans 150–265 (SAPLIPVFEN…KGIQTALEMT (116 aa)). Phosphothreonine is present on residues T171 and T205.

Interacts with RsbRB and RsbS in the stressosome. The stressosome probably also contains RsbRC and RsbRD. Post-translationally, phosphorylated by RsbT. This threonine phosphorylation abrogates the ability of RsbRA to stimulate RsbT in vitro.

Its function is as follows. Acts as a positive regulator of sigma-B activity in response to salt and heat stress by stimulating the activity of the RsbT kinase toward RsbS in vitro. One of 4 functionally non-identical RsbR paralogs, it functions in the environmental signaling branch of the general stress response. Functionally, negative regulator of sigma-B activity. Non-phosphorylated RsbS binds to RsbT, preventing its association with RsbU. Requires any one of RsbRA, RsbRB, RsbRC or RsbRD to sequester RsbT. When RsbS and the RsbR paralog(s) are phosphorylated, they release RsbT, which can then bind and activate RsbU. The polypeptide is RsbT co-antagonist protein RsbRA (rsbRA) (Bacillus subtilis (strain 168)).